We begin with the raw amino-acid sequence, 296 residues long: NAD kinase (296 aa).

The active-site Proton acceptor is the Asp-72. Residues 72-73, 146-147, Arg-157, Lys-174, Asp-176, 187-192, and Gln-247 contribute to the NAD(+) site; these read DG, ND, and TAYALS.

This sequence belongs to the NAD kinase family. A divalent metal cation is required as a cofactor.

The protein localises to the cytoplasm. It carries out the reaction NAD(+) + ATP = ADP + NADP(+) + H(+). In terms of biological role, involved in the regulation of the intracellular balance of NAD and NADP, and is a key enzyme in the biosynthesis of NADP. Catalyzes specifically the phosphorylation on 2'-hydroxyl of the adenosine moiety of NAD to yield NADP. This chain is NAD kinase, found in Pseudomonas fluorescens (strain ATCC BAA-477 / NRRL B-23932 / Pf-5).